A 401-amino-acid chain; its full sequence is Probable [pyruvate dehydrogenase (acetyl-transferring)] kinase, mitochondrial (401 aa).

One can recognise a Histidine kinase domain in the interval 131-360 (LIELRESDGV…DACIYLKAVP (230 aa)). ATP contacts are provided by residues 247-254 (ELFKNAMR), Asp-286, 305-306 (ST), and 321-326 (GYGYGL).

The protein belongs to the PDK/BCKDK protein kinase family.

Its subcellular location is the mitochondrion matrix. It catalyses the reaction L-seryl-[pyruvate dehydrogenase E1 alpha subunit] + ATP = O-phospho-L-seryl-[pyruvate dehydrogenase E1 alpha subunit] + ADP + H(+). Functionally, inhibits the mitochondrial pyruvate dehydrogenase complex by phosphorylation of the E1 alpha subunit, thus contributing to the regulation of glucose metabolism. Required for normal lifespan. The polypeptide is Probable [pyruvate dehydrogenase (acetyl-transferring)] kinase, mitochondrial (pdhk-2) (Caenorhabditis elegans).